A 723-amino-acid polypeptide reads, in one-letter code: Polyribonucleotide nucleotidyltransferase (723 aa).

Residues Asp488 and Asp494 each contribute to the Mg(2+) site. The 60-residue stretch at 555 to 614 folds into the KH domain; it reads PKIITLNIKPEKIKDVIGPGGKQINAIIEETGVKIDIEQDGTVYIASQDQAMNRKAIAII. One can recognise an S1 motif domain in the interval 624-692; it reads GEVYTGKVRR…HQGRVNLSRK (69 aa). Positions 692 to 723 are disordered; sequence KALLEKKEQPEGDKKPQAEKKFYPKTKKPESK. The span at 693–723 shows a compositional bias: basic and acidic residues; the sequence is ALLEKKEQPEGDKKPQAEKKFYPKTKKPESK.

The protein belongs to the polyribonucleotide nucleotidyltransferase family. Requires Mg(2+) as cofactor.

It localises to the cytoplasm. The catalysed reaction is RNA(n+1) + phosphate = RNA(n) + a ribonucleoside 5'-diphosphate. In terms of biological role, involved in mRNA degradation. Catalyzes the phosphorolysis of single-stranded polyribonucleotides processively in the 3'- to 5'-direction. In Listeria welshimeri serovar 6b (strain ATCC 35897 / DSM 20650 / CCUG 15529 / CIP 8149 / NCTC 11857 / SLCC 5334 / V8), this protein is Polyribonucleotide nucleotidyltransferase.